Consider the following 316-residue polypeptide: Actinorhodin polyketide synthase bifunctional cyclase/dehydratase (316 aa).

It functions in the pathway antibiotic biosynthesis; actinorhodin biosynthesis. Is needed for correct cyclization of the oligoketide leading to isochromanequinone formation. This is Actinorhodin polyketide synthase bifunctional cyclase/dehydratase from Streptomyces coelicolor (strain ATCC BAA-471 / A3(2) / M145).